A 602-amino-acid polypeptide reads, in one-letter code: Glutathione-regulated potassium-efflux system protein KefB (602 aa).

A run of 13 helical transmembrane segments spans residues 4-24 (TGLL…VPIA), 29-49 (IGAV…GLGF), 55-75 (EILH…GLEL), 87-107 (IFGV…ALLY), 115-135 (AAVI…LQLM), 152-172 (VLLF…ILAG), 181-201 (VKIG…RYLL), 207-227 (YIVA…VVLG), 230-250 (LFMD…GILL), 261-281 (IAIE…VGMA), 296-318 (LGVL…VFGL), 326-346 (FAGV…AAFS), and 356-376 (ALLL…MQVI). In terms of domain architecture, RCK N-terminal spans 400-519 (DPQVIIVGFG…NGVKDFTRET (120 aa)).

The protein belongs to the monovalent cation:proton antiporter 2 (CPA2) transporter (TC 2.A.37) family. KefB subfamily. As to quaternary structure, interacts with the regulatory subunit KefG.

Its subcellular location is the cell inner membrane. Its function is as follows. Pore-forming subunit of a potassium efflux system that confers protection against electrophiles. Catalyzes K(+)/H(+) antiport. This Yersinia pestis bv. Antiqua (strain Antiqua) protein is Glutathione-regulated potassium-efflux system protein KefB.